The sequence spans 197 residues: Large ribosomal subunit protein bL25 (197 aa).

It belongs to the bacterial ribosomal protein bL25 family. CTC subfamily. Part of the 50S ribosomal subunit; part of the 5S rRNA/L5/L18/L25 subcomplex. Contacts the 5S rRNA. Binds to the 5S rRNA independently of L5 and L18.

Its function is as follows. This is one of the proteins that binds to the 5S RNA in the ribosome where it forms part of the central protuberance. The chain is Large ribosomal subunit protein bL25 from Streptomyces avermitilis (strain ATCC 31267 / DSM 46492 / JCM 5070 / NBRC 14893 / NCIMB 12804 / NRRL 8165 / MA-4680).